We begin with the raw amino-acid sequence, 366 residues long: Ubiquitin carboxyl-terminal hydrolase 46 (366 aa).

The region spanning 35–365 (FGLVNFGNTC…SGYILFYQSR (331 aa)) is the USP domain. The active-site Nucleophile is the Cys44. Cys182, Cys185, Cys229, and Cys232 together coordinate Zn(2+). Residue His313 is the Proton acceptor of the active site.

This sequence belongs to the peptidase C19 family. USP12/USP46 subfamily. As to quaternary structure, interacts with WDR48. Interacts with WDR20. Interacts with DMWD. Component of the USP46/WDR20/WDR48 deubiquitinating complex. Broadly expressed.

It localises to the cytoplasm. It catalyses the reaction Thiol-dependent hydrolysis of ester, thioester, amide, peptide and isopeptide bonds formed by the C-terminal Gly of ubiquitin (a 76-residue protein attached to proteins as an intracellular targeting signal).. Its activity is regulated as follows. Activated by interaction with WDR48. Deubiquitinating enzyme that plays a role in behavior, possibly by regulating GABA action. May act by mediating the deubiquitination of GAD1/GAD67. Has almost no deubiquitinating activity by itself and requires the interaction with WDR48 to have a high activity. Not involved in deubiquitination of monoubiquitinated FANCD2. The protein is Ubiquitin carboxyl-terminal hydrolase 46 (USP46) of Homo sapiens (Human).